The following is a 150-amino-acid chain: Transcriptional repressor NrdR (150 aa).

A zinc finger lies at 3–34 (CPFCNASDTKVVDTRASEDDKIVRRRRECISC). The 91-residue stretch at 49-139 (LTVVKKDKNR…VYREFTDVKS (91 aa)) folds into the ATP-cone domain.

Belongs to the NrdR family. The cofactor is Zn(2+).

Negatively regulates transcription of bacterial ribonucleotide reductase nrd genes and operons by binding to NrdR-boxes. The chain is Transcriptional repressor NrdR from Finegoldia magna (strain ATCC 29328 / DSM 20472 / WAL 2508) (Peptostreptococcus magnus).